A 294-amino-acid polypeptide reads, in one-letter code: Syntaxin-19 (294 aa).

In terms of domain architecture, t-SNARE coiled-coil homology spans 209-271 (LSEIEQRHKE…NNTKEKFGLA (63 aa)).

Belongs to the syntaxin family. As to quaternary structure, interacts with EGFR.

Its subcellular location is the cell membrane. The protein resides in the cytoplasm. In terms of biological role, plays a role in endosomal trafficking of the epidermal growth factor receptor (EGFR). This chain is Syntaxin-19 (STX19), found in Pongo abelii (Sumatran orangutan).